The following is a 116-amino-acid chain: UPF0122 protein CA_C1753 (116 aa).

Belongs to the UPF0122 family.

In terms of biological role, might take part in the signal recognition particle (SRP) pathway. This is inferred from the conservation of its genetic proximity to ftsY/ffh. May be a regulatory protein. This chain is UPF0122 protein CA_C1753, found in Clostridium acetobutylicum (strain ATCC 824 / DSM 792 / JCM 1419 / IAM 19013 / LMG 5710 / NBRC 13948 / NRRL B-527 / VKM B-1787 / 2291 / W).